Consider the following 342-residue polypeptide: N-acetyl-gamma-glutamyl-phosphate reductase (342 aa).

Cys-149 is an active-site residue.

Belongs to the NAGSA dehydrogenase family. Type 1 subfamily.

Its subcellular location is the cytoplasm. The enzyme catalyses N-acetyl-L-glutamate 5-semialdehyde + phosphate + NADP(+) = N-acetyl-L-glutamyl 5-phosphate + NADPH + H(+). It functions in the pathway amino-acid biosynthesis; L-arginine biosynthesis; N(2)-acetyl-L-ornithine from L-glutamate: step 3/4. Catalyzes the NADPH-dependent reduction of N-acetyl-5-glutamyl phosphate to yield N-acetyl-L-glutamate 5-semialdehyde. In Nitrosomonas eutropha (strain DSM 101675 / C91 / Nm57), this protein is N-acetyl-gamma-glutamyl-phosphate reductase.